A 182-amino-acid chain; its full sequence is CASP-like protein 5A1 (182 aa).

Residues 1–47 (MEMASHPAVHPVALPPPYQAVGPPAPPAVRINDFPGSPGTLMGLALR) are Cytoplasmic-facing. Residues 48-68 (FAQLGFALTALCIMVSIVGFS) form a helical membrane-spanning segment. The Extracellular portion of the chain corresponds to 69–72 (SVTA). Residues 73–93 (FCFLVAAMVLQCIWSLCLGVL) form a helical membrane-spanning segment. The Cytoplasmic segment spans residues 94–117 (DCYALLTKRSLRNSLILSFFVVGD). The chain crosses the membrane as a helical span at residues 118–138 (WITSTMTFAGACAAAGITVLI). At 139–158 (DNDLNQCGPNHCNRFEAAAA) the chain is on the extracellular side. A helical membrane pass occupies residues 159-179 (MAFMSWVITTISFFLSFWILV). Over 180 to 182 (TCR) the chain is Cytoplasmic.

This sequence belongs to the Casparian strip membrane proteins (CASP) family. In terms of assembly, homodimer and heterodimers.

The protein localises to the cell membrane. This Physcomitrium patens (Spreading-leaved earth moss) protein is CASP-like protein 5A1.